A 705-amino-acid polypeptide reads, in one-letter code: Translation initiation factor IF-2 (705 aa).

Residues 40–124 (DDQIKALDKK…QPAAPKEIPS (85 aa)) are disordered. The segment covering 41-58 (DQIKALDKKFKKEQKNDN) has biased composition (basic and acidic residues). Residues 59–77 (KQSTQNNHQKSNNQNQNKG) are compositionally biased toward low complexity. Basic residues predominate over residues 94–108 (KGNKKNNRNNKKNNK). The tr-type G domain occupies 207–376 (ERPAVVTIMG…GLVAEVQELK (170 aa)). The interval 216 to 223 (GHVDHGKT) is G1. Position 216-223 (216-223 (GHVDHGKT)) interacts with GTP. A G2 region spans residues 241–245 (GITQH). The segment at 262 to 265 (DTPG) is G3. Residues 262–266 (DTPGH) and 316–319 (NKID) contribute to the GTP site. The G4 stretch occupies residues 316–319 (NKID). The G5 stretch occupies residues 352–354 (SAL).

The protein belongs to the TRAFAC class translation factor GTPase superfamily. Classic translation factor GTPase family. IF-2 subfamily.

Its subcellular location is the cytoplasm. Its function is as follows. One of the essential components for the initiation of protein synthesis. Protects formylmethionyl-tRNA from spontaneous hydrolysis and promotes its binding to the 30S ribosomal subunits. Also involved in the hydrolysis of GTP during the formation of the 70S ribosomal complex. This chain is Translation initiation factor IF-2, found in Staphylococcus aureus (strain Mu3 / ATCC 700698).